The sequence spans 376 residues: Alpha-2,8-sialyltransferase 8E (376 aa).

Residues 1–17 (MRYADPSANRDLLGNRT) lie on the Cytoplasmic side of the membrane. A helical; Signal-anchor for type II membrane protein membrane pass occupies residues 18–38 (LLFIFICAFALVTLLQQILYG). Residues 39–376 (RNYIKRYFEF…RVHTGTCSCC (338 aa)) are Lumenal-facing. 2 N-linked (GlcNAc...) asparagine glycosylation sites follow: Asn-56 and Asn-96. 2 disulfides stabilise this stretch: Cys-164–Cys-313 and Cys-178–Cys-373. Substrate-binding positions include Asn-192 and 214-216 (NPS). N-linked (GlcNAc...) asparagine glycosylation is found at Asn-241 and Asn-284. Residue 300–302 (STG) coordinates substrate. His-348 serves as the catalytic Proton donor/acceptor.

The protein belongs to the glycosyltransferase 29 family.

Its subcellular location is the golgi apparatus membrane. The catalysed reaction is a ganglioside GQ1c (d18:1(4E)) + CMP-N-acetyl-beta-neuraminate = a ganglioside GP1c (d18:1(4E)) + CMP + H(+). The protein operates within protein modification; protein glycosylation. Its function is as follows. Involved in the synthesis of gangliosides GD1c, GT1a, GQ1b, GP1c and GT3 from GD1a, GT1b, GM1b and GD3 respectively. The polypeptide is Alpha-2,8-sialyltransferase 8E (ST8SIA5) (Pan troglodytes (Chimpanzee)).